Consider the following 171-residue polypeptide: Adenine phosphoribosyltransferase (171 aa).

The protein belongs to the purine/pyrimidine phosphoribosyltransferase family. As to quaternary structure, homodimer.

Its subcellular location is the cytoplasm. The catalysed reaction is AMP + diphosphate = 5-phospho-alpha-D-ribose 1-diphosphate + adenine. It participates in purine metabolism; AMP biosynthesis via salvage pathway; AMP from adenine: step 1/1. In terms of biological role, catalyzes a salvage reaction resulting in the formation of AMP, that is energically less costly than de novo synthesis. The sequence is that of Adenine phosphoribosyltransferase from Mycoplasmopsis fermentans (strain ATCC 19989 / NBRC 14854 / NCTC 10117 / PG18) (Mycoplasma fermentans).